The primary structure comprises 443 residues: ATP-dependent protease ATPase subunit HslU (443 aa).

ATP-binding positions include Ile-20, 62-67 (GVGKTE), Asp-255, Glu-321, and Arg-393.

This sequence belongs to the ClpX chaperone family. HslU subfamily. As to quaternary structure, a double ring-shaped homohexamer of HslV is capped on each side by a ring-shaped HslU homohexamer. The assembly of the HslU/HslV complex is dependent on binding of ATP.

The protein localises to the cytoplasm. ATPase subunit of a proteasome-like degradation complex; this subunit has chaperone activity. The binding of ATP and its subsequent hydrolysis by HslU are essential for unfolding of protein substrates subsequently hydrolyzed by HslV. HslU recognizes the N-terminal part of its protein substrates and unfolds these before they are guided to HslV for hydrolysis. This is ATP-dependent protease ATPase subunit HslU from Helicobacter pylori (strain Shi470).